The chain runs to 138 residues: Large ribosomal subunit protein uL16 (138 aa).

The span at 1–17 shows a compositional bias: basic residues; that stretch reads MLIPRKVKHRKQHHPRQ. The segment at 1 to 24 is disordered; sequence MLIPRKVKHRKQHHPRQRGIASGG.

Belongs to the universal ribosomal protein uL16 family. As to quaternary structure, part of the 50S ribosomal subunit.

Its function is as follows. Binds 23S rRNA and is also seen to make contacts with the A and possibly P site tRNAs. This is Large ribosomal subunit protein uL16 from Mycobacterium ulcerans (strain Agy99).